A 306-amino-acid polypeptide reads, in one-letter code: Ribosomal protein L11 methyltransferase (306 aa).

Positions 152, 179, 201, and 243 each coordinate S-adenosyl-L-methionine.

The protein belongs to the methyltransferase superfamily. PrmA family.

The protein localises to the cytoplasm. The catalysed reaction is L-lysyl-[protein] + 3 S-adenosyl-L-methionine = N(6),N(6),N(6)-trimethyl-L-lysyl-[protein] + 3 S-adenosyl-L-homocysteine + 3 H(+). In terms of biological role, methylates ribosomal protein L11. The chain is Ribosomal protein L11 methyltransferase from Citrifermentans bemidjiense (strain ATCC BAA-1014 / DSM 16622 / JCM 12645 / Bem) (Geobacter bemidjiensis).